A 142-amino-acid polypeptide reads, in one-letter code: Deoxyuridine 5'-triphosphate nucleotidohydrolase (142 aa).

It belongs to the dUTPase family. Mg(2+) is required as a cofactor.

The catalysed reaction is dUTP + H2O = dUMP + diphosphate + H(+). Its function is as follows. This enzyme is involved in nucleotide metabolism: it produces dUMP, the immediate precursor of thymidine nucleotides and it decreases the intracellular concentration of dUTP so that uracil cannot be incorporated into DNA. This is Deoxyuridine 5'-triphosphate nucleotidohydrolase (DUT) from Swinepox virus (strain Kasza) (SWPV).